The following is a 347-amino-acid chain: MQVGIVGGSGYIAGQLLRMLAFHKDIEIKIVSSKSHAGEKLSRVHPDLLNILDLRFSDMDPVDLASRVDLVFLALPHGTSINYVPDIYEIGTKIIDMSADFRLKDPDLYREWYGFEHNYPDLLEKFVYGMPEFHRNEIKNSRYVSVPGCIASSTIYSVAPFSMLNLDNNIVTVDAKVGSSGSGSGTDSSKNYSERYNSVRAYKPVHHRHTPEIEQEIKYISGKNIKIAMSAHSVNMVRGILTTSNIFIDLDEPDALSQLREFYKNEKFIRLIFDRKSNFRYPDPKTVIGTNFADLGVISDGYIKRIVSLGAIDNMIKGAAGNAIQSMNIMNHFDESEGLLIPAAFPV.

9–12 provides a ligand contact to NADP(+); sequence SGYI. The active site involves C149. Position 314 (N314) interacts with NADP(+).

It belongs to the NAGSA dehydrogenase family. Type 1 subfamily. LysY sub-subfamily.

The protein resides in the cytoplasm. The catalysed reaction is [amino-group carrier protein]-C-terminal-N-(1-carboxy-5-oxopentan-1-yl)-L-glutamine + phosphate + NADP(+) = [amino-group carrier protein]-C-terminal-N-(1-carboxy-5-phosphooxy-5-oxopentan-1-yl)-L-glutamine + NADPH + H(+). It carries out the reaction [amino-group carrier protein]-C-terminal-gamma-(L-glutamyl-5-semialdehyde)-L-glutamate + phosphate + NADP(+) = [amino-group carrier protein]-C-terminal-gamma-(5-phospho-L-glutamyl)-L-glutamate + NADPH + H(+). Its pathway is amino-acid biosynthesis; L-lysine biosynthesis via AAA pathway; L-lysine from L-alpha-aminoadipate (Thermus route): step 3/5. It functions in the pathway amino-acid biosynthesis; L-arginine biosynthesis. Involved in both the arginine and lysine biosynthetic pathways. This is Putative [LysW]-L-2-aminoadipate/[LysW]-L-glutamate phosphate reductase from Picrophilus torridus (strain ATCC 700027 / DSM 9790 / JCM 10055 / NBRC 100828 / KAW 2/3).